The sequence spans 600 residues: Aspartate--tRNA(Asp/Asn) ligase (600 aa).

Glu175 is an L-aspartate binding site. The segment at 199–202 is aspartate; it reads QLFK. Arg221 contacts L-aspartate. Residues 221–223 and Gln230 contribute to the ATP site; that span reads RDE. An L-aspartate-binding site is contributed by His453. Residue Glu487 participates in ATP binding. Arg494 contributes to the L-aspartate binding site. An ATP-binding site is contributed by 539–542; it reads GWDR. Residues 578-600 are disordered; it reads AAQRKESGIDFKPKKGPQGQKEK. Over residues 580 to 590 the composition is skewed to basic and acidic residues; sequence QRKESGIDFKP.

This sequence belongs to the class-II aminoacyl-tRNA synthetase family. Type 1 subfamily. As to quaternary structure, homodimer.

Its subcellular location is the cytoplasm. The catalysed reaction is tRNA(Asx) + L-aspartate + ATP = L-aspartyl-tRNA(Asx) + AMP + diphosphate. In terms of biological role, aspartyl-tRNA synthetase with relaxed tRNA specificity since it is able to aspartylate not only its cognate tRNA(Asp) but also tRNA(Asn). Reaction proceeds in two steps: L-aspartate is first activated by ATP to form Asp-AMP and then transferred to the acceptor end of tRNA(Asp/Asn). This is Aspartate--tRNA(Asp/Asn) ligase from Corynebacterium jeikeium (strain K411).